The sequence spans 150 residues: MKVIFLADVKGKGKKGEIKEVPTGYAQNFLIKKNLAKEATSQSIGELKGKQKAEEKAQAEILAEAQAVKAVLDEDKTRVQFQEKVGPDGRTFGSITAKKISEELQKQFGVKVDKRHIVLDHPIRAIGLIEVPVKLHKEVTAEIKLAITEA.

This sequence belongs to the bacterial ribosomal protein bL9 family.

In terms of biological role, binds to the 23S rRNA. The sequence is that of Large ribosomal subunit protein bL9 from Streptococcus pyogenes serotype M3 (strain SSI-1).